The primary structure comprises 376 residues: Biotin synthase (376 aa).

A Radical SAM core domain is found at 68 to 292; the sequence is NEVQISTLLS…IAVTRICCPS (225 aa). [4Fe-4S] cluster is bound by residues Cys-83, Cys-87, and Cys-90. [2Fe-2S] cluster is bound by residues Cys-129, Cys-160, Cys-220, and Arg-296.

This sequence belongs to the radical SAM superfamily. Biotin synthase family. As to quaternary structure, homodimer. The cofactor is [4Fe-4S] cluster. [2Fe-2S] cluster is required as a cofactor.

The enzyme catalyses (4R,5S)-dethiobiotin + (sulfur carrier)-SH + 2 reduced [2Fe-2S]-[ferredoxin] + 2 S-adenosyl-L-methionine = (sulfur carrier)-H + biotin + 2 5'-deoxyadenosine + 2 L-methionine + 2 oxidized [2Fe-2S]-[ferredoxin]. It functions in the pathway cofactor biosynthesis; biotin biosynthesis; biotin from 7,8-diaminononanoate: step 2/2. Its function is as follows. Catalyzes the conversion of dethiobiotin (DTB) to biotin by the insertion of a sulfur atom into dethiobiotin via a radical-based mechanism. The polypeptide is Biotin synthase (Psychrobacter cryohalolentis (strain ATCC BAA-1226 / DSM 17306 / VKM B-2378 / K5)).